Consider the following 96-residue polypeptide: Muconolactone Delta-isomerase (96 aa).

This sequence belongs to the muconolactone Delta-isomerase family. In terms of assembly, homodecamer.

It catalyses the reaction (S)-muconolactone = (4,5-dihydro-5-oxofuran-2-yl)-acetate. Its pathway is aromatic compound metabolism; beta-ketoadipate pathway; 5-oxo-4,5-dihydro-2-furylacetate from catechol: step 3/3. The protein is Muconolactone Delta-isomerase (catC) of Pseudomonas putida (Arthrobacter siderocapsulatus).